The primary structure comprises 536 residues: Putative lipase ATG15 (536 aa).

Over 1–8 (MGNPTLMR) the chain is Cytoplasmic. Residues 9 to 31 (WPVTRILVLGLVVTVLYKAMAIY) form a helical; Signal-anchor for type II membrane protein membrane-spanning segment. The Lumenal segment spans residues 32–536 (SSRRAPVQVC…YCLEYGPELR (505 aa)). N152, N187, and N293 each carry an N-linked (GlcNAc...) asparagine glycan. S309 acts as the Charge relay system in catalysis. N-linked (GlcNAc...) asparagine glycans are attached at residues N426 and N516.

This sequence belongs to the AB hydrolase superfamily. Lipase family. As to quaternary structure, binds to both phosphatidylinositol (PI) and phosphatidylinositol 3,5-bisphosphate (PIP2).

It is found in the endosome. The protein resides in the multivesicular body membrane. The protein localises to the prevacuolar compartment membrane. It carries out the reaction a triacylglycerol + H2O = a diacylglycerol + a fatty acid + H(+). Its function is as follows. Lipase which is essential for lysis of subvacuolar cytoplasm to vacuole targeted bodies and intravacuolar autophagic bodies. Involved in the lysis of intravacuolar multivesicular body (MVB) vesicles. The intravacuolar membrane disintegration by ATG15 is critical to life span extension. This chain is Putative lipase ATG15 (ATG15), found in Pichia angusta (Yeast).